The sequence spans 349 residues: MLTLSDFDFPLPPELIAQSALPDRSASRLLVVERLAPGEQPDAIRLVDRAFSDIIGYLKPEDLLVFNDTRVIKARFFGQKPSGGKVEVLVERVLDTHTVLAQVRASKTPAEGSLLHLAEDAFAVTVGPRVDQFFTLRFPAPALDLIEQYGRLPLPPYITHDPDAYDETRYQTVYARNPGAVAAPTAGLHFDDALFARLDAAGVRRAFLTLHVGAGTFQPVRTENIAEHKMHSEWYAISPELADAVRETRKRGGRVIAVGTTSLRALESAAKPDGTLEAGNGDTDIFITPGYQFRLVDALITNFHLPKSTLLMLVSALAGVEAIRAAYRHAVEARYRFFSYGDAMLLTRQ.

This sequence belongs to the QueA family. Monomer.

It is found in the cytoplasm. The catalysed reaction is 7-aminomethyl-7-carbaguanosine(34) in tRNA + S-adenosyl-L-methionine = epoxyqueuosine(34) in tRNA + adenine + L-methionine + 2 H(+). It participates in tRNA modification; tRNA-queuosine biosynthesis. Transfers and isomerizes the ribose moiety from AdoMet to the 7-aminomethyl group of 7-deazaguanine (preQ1-tRNA) to give epoxyqueuosine (oQ-tRNA). The protein is S-adenosylmethionine:tRNA ribosyltransferase-isomerase of Cupriavidus pinatubonensis (strain JMP 134 / LMG 1197) (Cupriavidus necator (strain JMP 134)).